A 176-amino-acid chain; its full sequence is Translation initiation factor IF-3 (176 aa).

This sequence belongs to the IF-3 family. As to quaternary structure, monomer.

The protein resides in the cytoplasm. In terms of biological role, IF-3 binds to the 30S ribosomal subunit and shifts the equilibrium between 70S ribosomes and their 50S and 30S subunits in favor of the free subunits, thus enhancing the availability of 30S subunits on which protein synthesis initiation begins. In Streptococcus agalactiae serotype Ia (strain ATCC 27591 / A909 / CDC SS700), this protein is Translation initiation factor IF-3.